Consider the following 644-residue polypeptide: G-protein coupled receptor-associated protein LMBRD2 (644 aa).

The Extracellular portion of the chain corresponds to 1–4; the sequence is MGTV. A helical transmembrane segment spans residues 5-27; that stretch reads SLAVQLFIVFLLTSYLLNKYSTI. Topologically, residues 28-31 are cytoplasmic; the sequence is RKQN. The chain crosses the membrane as a helical span at residues 32-52; the sequence is PIVTISTFIGWYFSLIIVFVL. The Extracellular segment spans residues 53–102; it reads PLDVAITFFHKCENDRQRVLNTTSTPAPIVPECELPGGYVPDDVLFDLWR. Asparagine 73 carries N-linked (GlcNAc...) asparagine glycosylation. Residues 103 to 123 traverse the membrane as a helical segment; sequence VVYWSAQILTWLILPLLQSYV. At 124–145 the chain is on the cytoplasmic side; the sequence is TAGNFTIFGKIRAAVINNTVYY. A helical membrane pass occupies residues 146–166; the sequence is AIYSLCFLAILIYAMFKGVSI. The Extracellular portion of the chain corresponds to 167 to 172; that stretch reads NIENLK. The chain crosses the membrane as a helical span at residues 173–193; the sequence is VILVSASNTWGLFLLVVLLGH. The Cytoplasmic portion of the chain corresponds to 194-369; it reads GLVELPRSLW…RLQTPFCRVL (176 aa). The stretch at 216-245 forms a coiled coil; it reads YFDIEKLASEKSEAEENVKEIYKKVRVLFN. A helical transmembrane segment spans residues 370–390; it reads GVVTVFMTFFVLFSECTFFVV. At 391-412 the chain is on the extracellular side; sequence SYTVSPAAFVTEYASNRFHYKY. A helical membrane pass occupies residues 413-433; that stretch reads TQFVAFGIIVYLITCAYFTIF. The Cytoplasmic portion of the chain corresponds to 434–453; the sequence is RLQIYKYYHLDPNGHTDENS. The chain crosses the membrane as a helical span at residues 454–474; the sequence is ILFSAILLCRLTPPICLNFLG. Topologically, residues 475-502 are extracellular; the sequence is MIHMDSHVSMAKSFGVETQFTKLMGHLD. The helical transmembrane segment at 503-523 threads the bilayer; that stretch reads VIPILAKGINIYLPICIILLC. At 524–644 the chain is on the cytoplasmic side; it reads AIHYYRVGAY…PSSSGFFDDM (121 aa). The segment covering 567-576 has biased composition (basic and acidic residues); the sequence is SIKRSNERNQ. Positions 567 to 644 are disordered; the sequence is SIKRSNERNQ…PSSSGFFDDM (78 aa). The span at 578 to 594 shows a compositional bias: low complexity; that stretch reads NQSWTNTITSNTSTTSN. A compositionally biased stretch (polar residues) spans 621 to 644; it reads VSSTTRISLSPTEHPSSSGFFDDM.

This sequence belongs to the LIMR family.

The protein resides in the cell membrane. In terms of biological role, may associate with G-protein coupled receptors and regulate downstream signaling pathways. The chain is G-protein coupled receptor-associated protein LMBRD2 from Caenorhabditis briggsae.